We begin with the raw amino-acid sequence, 446 residues long: Histidine--tRNA ligase (446 aa).

This sequence belongs to the class-II aminoacyl-tRNA synthetase family. Homodimer.

Its subcellular location is the cytoplasm. The catalysed reaction is tRNA(His) + L-histidine + ATP = L-histidyl-tRNA(His) + AMP + diphosphate + H(+). The polypeptide is Histidine--tRNA ligase (Burkholderia pseudomallei (strain 1710b)).